An 882-amino-acid polypeptide reads, in one-letter code: Valine--tRNA ligase (882 aa).

Positions 45–55 match the 'HIGH' region motif; that stretch reads PNVTGKLHLGH. The 'KMSKS' region motif lies at 519-523; that stretch reads KMSKS. Residue lysine 522 participates in ATP binding. Residues 808-882 are a coiled coil; it reads LADLLNVEEE…RIAEMHKLVK (75 aa).

It belongs to the class-I aminoacyl-tRNA synthetase family. ValS type 1 subfamily. In terms of assembly, monomer.

The protein localises to the cytoplasm. It catalyses the reaction tRNA(Val) + L-valine + ATP = L-valyl-tRNA(Val) + AMP + diphosphate. In terms of biological role, catalyzes the attachment of valine to tRNA(Val). As ValRS can inadvertently accommodate and process structurally similar amino acids such as threonine, to avoid such errors, it has a 'posttransfer' editing activity that hydrolyzes mischarged Thr-tRNA(Val) in a tRNA-dependent manner. The chain is Valine--tRNA ligase from Streptococcus pyogenes serotype M18 (strain MGAS8232).